The sequence spans 358 residues: Replication factor C subunit 5 (358 aa).

It belongs to the activator 1 small subunits family. As to quaternary structure, heteropentamer of subunits rfc1, rfc2, rfc3, rfc4 and rfc5 that forms a complex (RFC) with PCNA in the presence of ATP. Two other complexes exist where rfc1 can be replaced by either ctf18 or elg1 to form the ctf18-RFC or the elg1-RFC complexes respectively.

The protein resides in the nucleus. The elongation of primed DNA templates by DNA polymerase delta and epsilon requires the action of the accessory proteins PCNA and activator 1. The chain is Replication factor C subunit 5 (rfc5) from Schizosaccharomyces pombe (strain 972 / ATCC 24843) (Fission yeast).